Consider the following 87-residue polypeptide: Mitochondrial import inner membrane translocase subunit TIM9 (87 aa).

M1 is modified (N-acetylmethionine). The short motif at 35–59 (CFTDCVNDFTTSKLTNKEQTCIMKC) is the Twin CX3C motif element. Intrachain disulfides connect C35-C59 and C39-C55.

The protein belongs to the small Tim family. Heterohexamer; composed of 3 copies of TIM9 and 3 copies of TIM10, named soluble 70 kDa complex. Associates with the TIM12 component of the TIM22 complex, whose core is composed of TIM18, TIM22 and TIM54. Interacts with the transmembrane regions of multi-pass transmembrane proteins in transit.

Its subcellular location is the mitochondrion inner membrane. It is found in the mitochondrion intermembrane space. Mitochondrial intermembrane chaperone that participates in the import and insertion of multi-pass transmembrane proteins into the mitochondrial inner membrane. Also required for the transfer of beta-barrel precursors from the TOM complex to the sorting and assembly machinery (SAM complex) of the outer membrane. Acts as a chaperone-like protein that protects the hydrophobic precursors from aggregation and guide them through the mitochondrial intermembrane space. Compared to TIM10, it may have a strong structural role. In Saccharomyces cerevisiae (strain ATCC 204508 / S288c) (Baker's yeast), this protein is Mitochondrial import inner membrane translocase subunit TIM9 (TIM9).